The primary structure comprises 400 residues: tRNA-specific 2-thiouridylase MnmA (400 aa).

ATP contacts are provided by residues 19–26 and Leu-45; that span reads AMSGGVDS. The active-site Nucleophile is the Cys-113. The cysteines at positions 113 and 210 are disulfide-linked. Gly-137 serves as a coordination point for ATP. The tract at residues 160–162 is interaction with tRNA; that stretch reads RDQ. Cys-210 acts as the Cysteine persulfide intermediate in catalysis.

It belongs to the MnmA/TRMU family.

Its subcellular location is the cytoplasm. The enzyme catalyses S-sulfanyl-L-cysteinyl-[protein] + uridine(34) in tRNA + AH2 + ATP = 2-thiouridine(34) in tRNA + L-cysteinyl-[protein] + A + AMP + diphosphate + H(+). Functionally, catalyzes the 2-thiolation of uridine at the wobble position (U34) of tRNA, leading to the formation of s(2)U34. The chain is tRNA-specific 2-thiouridylase MnmA from Nitrobacter winogradskyi (strain ATCC 25391 / DSM 10237 / CIP 104748 / NCIMB 11846 / Nb-255).